The following is a 586-amino-acid chain: uncharacterized protein (586 aa).

In terms of domain architecture, ABC transmembrane type-1 spans tyrosine 29–serine 312. Transmembrane regions (helical) follow at residues glycine 30 to methionine 50, valine 66 to valine 86, methionine 162 to valine 184, and isoleucine 256 to valine 276. One can recognise an ABC transporter domain in the interval isoleucine 346–leucine 580. Residue glycine 379 to serine 386 participates in ATP binding.

It belongs to the ABC transporter superfamily.

The protein localises to the cell membrane. This is an uncharacterized protein from Sinorhizobium fredii (strain NBRC 101917 / NGR234).